Here is a 404-residue protein sequence, read N- to C-terminus: Translation initiation factor eIF2B subunit gamma (404 aa).

Belongs to the eIF-2B gamma/epsilon subunits family. As to quaternary structure, component of the translation initiation factor 2B (eIF2B) complex which is a heterodecamer of two sets of five different subunits: alpha, beta, gamma, delta and epsilon. Subunits alpha, beta and delta comprise a regulatory subcomplex and subunits epsilon and gamma comprise a catalytic subcomplex. Within the complex, the hexameric regulatory complex resides at the center, with the two heterodimeric catalytic subcomplexes bound on opposite sides.

It is found in the cytoplasm. It localises to the cytosol. Its function is as follows. Acts as a component of the translation initiation factor 2B (eIF2B) complex, which catalyzes the exchange of GDP for GTP on the eukaryotic initiation factor 2 (eIF2) complex gamma subunit. Its guanine nucleotide exchange factor activity is repressed when bound to eIF2 complex phosphorylated on the alpha subunit, thereby limiting the amount of methionyl-initiator methionine tRNA available to the ribosome and consequently global translation is repressed. This Caenorhabditis elegans protein is Translation initiation factor eIF2B subunit gamma.